Reading from the N-terminus, the 65-residue chain is Movement protein TGBp3 (65 aa).

The Lumenal portion of the chain corresponds to 1 to 6; that stretch reads MLPKMQ. The chain crosses the membrane as a helical span at residues 7 to 26; the sequence is PSAQCLIVFSLAFVLGWYVL. Residues 27–65 are Cytoplasmic-facing; sequence RPGNTSCVLLITGESVRLVNCELTKDLVEAVLLRPLKHL.

This sequence belongs to the Tymovirales TGBp3 protein family.

Its subcellular location is the host endoplasmic reticulum membrane. In terms of biological role, plays a role in viral cell-to-cell propagation, by facilitating genome transport to neighboring plant cells through plasmosdesmata. May induce the formation of granular vesicles derived from the Endoplasmic reticulum, which align on actin filaments. This Potato virus S (strain Peruvian) protein is Movement protein TGBp3.